We begin with the raw amino-acid sequence, 99 residues long: A-type ATP synthase subunit F (99 aa).

The protein belongs to the V-ATPase F subunit family. Has multiple subunits with at least A(3), B(3), C, D, E, F, H, I and proteolipid K(x).

It is found in the cell membrane. Its function is as follows. Component of the A-type ATP synthase that produces ATP from ADP in the presence of a proton gradient across the membrane. This Methanococcus aeolicus (strain ATCC BAA-1280 / DSM 17508 / OCM 812 / Nankai-3) protein is A-type ATP synthase subunit F.